Here is a 515-residue protein sequence, read N- to C-terminus: Glycosyltransferase family 92 protein F59C6.8 (515 aa).

A helical transmembrane segment spans residues 18–38; that stretch reads LFIFIAVCLGFLIAVTILAGL. A GT92 domain is found at 163–456; sequence RKVVACFSPL…IEVCYNRIFY (294 aa).

It belongs to the glycosyltransferase 92 family.

The protein resides in the membrane. This is Glycosyltransferase family 92 protein F59C6.8 from Caenorhabditis elegans.